A 312-amino-acid chain; its full sequence is DNA-directed RNA polymerase subunit alpha (312 aa).

The segment at 1–226 is alpha N-terminal domain (alpha-NTD); sequence MIEFEKPIIT…EHLNLFTDLT (226 aa). Residues 243–312 form an alpha C-terminal domain (alpha-CTD) region; that stretch reads DEKVLDRTIE…DLGLGLKNDK (70 aa).

It belongs to the RNA polymerase alpha chain family. Homodimer. The RNAP catalytic core consists of 2 alpha, 1 beta, 1 beta' and 1 omega subunit. When a sigma factor is associated with the core the holoenzyme is formed, which can initiate transcription.

It carries out the reaction RNA(n) + a ribonucleoside 5'-triphosphate = RNA(n+1) + diphosphate. Functionally, DNA-dependent RNA polymerase catalyzes the transcription of DNA into RNA using the four ribonucleoside triphosphates as substrates. The sequence is that of DNA-directed RNA polymerase subunit alpha from Streptococcus mutans serotype c (strain ATCC 700610 / UA159).